We begin with the raw amino-acid sequence, 155 residues long: Transcriptional repressor NrdR (155 aa).

A zinc finger spans residues 3-34 (CPFCGNIDTQVKDSRPAEDHVSIRRRRFCPAC). The region spanning 49 to 139 (LVVIKSTGKR…VYKNFQAADD (91 aa)) is the ATP-cone domain.

It belongs to the NrdR family. Zn(2+) is required as a cofactor.

Its function is as follows. Negatively regulates transcription of bacterial ribonucleotide reductase nrd genes and operons by binding to NrdR-boxes. The chain is Transcriptional repressor NrdR from Roseobacter denitrificans (strain ATCC 33942 / OCh 114) (Erythrobacter sp. (strain OCh 114)).